The chain runs to 720 residues: Iron-sulfur clusters transporter ATM1, mitochondrial (720 aa).

The transit peptide at 1 to 36 directs the protein to the mitochondrion; it reads MIMFRSLSVTPVWKAGLSLSHRSIPINSRLSSVRNY. Residues 37–129 lie on the Mitochondrial matrix side of the membrane; sequence ISIGCANKTG…PSGDNKVKIR (93 aa). A compositionally biased stretch (polar residues) spans 64–77; that stretch reads RFNSSSNGNGTDKN. The interval 64 to 102 is disordered; that stretch reads RFNSSSNGNGTDKNASVAPKTEVKKIVPPKPSTNGKSKT. Residues 130-151 form a helical membrane-spanning segment; that stretch reads VLIALALLIGAKLLNVQVPFFF. Residues 130–421 enclose the ABC transmembrane type-1 domain; sequence VLIALALLIG…LGSVYRELKQ (292 aa). Residues 152–175 lie on the Mitochondrial intermembrane side of the membrane; that stretch reads KQTIDSMNIEWGPDVATVLPVAIT. Residues 176-199 traverse the membrane as a helical segment; sequence MTILSYGAARFGAVMFGELRNAVF. Topologically, residues 200–248 are mitochondrial matrix; sequence AKVAQNAIRKVSLQTFQHLMKLDLGWHLSRQTGGLTRAMDRGTKGISYV. A helical membrane pass occupies residues 249–272; sequence LSAMVFHMIPITFEISVVCGILTY. Position 273 (Q273) is a topological domain, mitochondrial intermembrane. A helical membrane pass occupies residues 274-294; sequence FGSSFAAMTFVTMLLYSFFTF. Residues 295-360 lie on the Mitochondrial matrix side of the membrane; that stretch reads KTTAWRTEFR…SQIKVAQSLA (66 aa). Glutathione contacts are provided by residues 300–304 and 363–366; these read RTEFR and NAGQ. Residues 361 to 379 traverse the membrane as a helical segment; that stretch reads FLNAGQNFIFTSALTAMMY. Residues 380–394 are Mitochondrial intermembrane-facing; the sequence is MGASGVMEGALTVGD. Residues 395 to 416 form a helical membrane-spanning segment; that stretch reads LVLINQLVFQLSVPLNFLGSVY. A glutathione-binding site is contributed by G413. Topologically, residues 417–720 are mitochondrial matrix; that stretch reads RELKQSLIDM…EKEPRTSKKD (304 aa). The region spanning 456-692 is the ABC transporter domain; that stretch reads IKFENVTFGY…PNSLYSELWN (237 aa). ATP is bound by residues Y465 and 489-500; that span reads GPSGSGKSTILR.

It belongs to the ABC transporter superfamily. ABCB family. Heavy Metal importer (TC 3.A.1.210) subfamily. Homodimer.

The protein resides in the mitochondrion inner membrane. Functionally, performs an essential function in the generation of cytoplasmic iron-sulfur proteins by mediating the ATP-dependent export of Fe/S cluster precursors synthesized by NFS1 and other mitochondrial proteins. Hydrolyzes ATP. Binds glutathione and may function by transporting a glutathione-conjugated iron-sulfur compound. This chain is Iron-sulfur clusters transporter ATM1, mitochondrial, found in Kluyveromyces lactis (strain ATCC 8585 / CBS 2359 / DSM 70799 / NBRC 1267 / NRRL Y-1140 / WM37) (Yeast).